We begin with the raw amino-acid sequence, 465 residues long: D(1C) dopamine receptor (465 aa).

Residues methionine 1–leucine 30 lie on the Extracellular side of the membrane. Asparagine 3 and asparagine 8 each carry an N-linked (GlcNAc...) asparagine glycan. A helical membrane pass occupies residues threonine 31–isoleucine 54. The Cytoplasmic portion of the chain corresponds to lysine 55–asparagine 65. A helical transmembrane segment spans residues phenylalanine 66 to alanine 92. At glycine 93–cysteine 101 the chain is on the extracellular side. Cysteine 101 and cysteine 187 are joined by a disulfide. A helical transmembrane segment spans residues aspartate 102 to leucine 124. Over aspartate 125 to arginine 143 the chain is Cytoplasmic. The chain crosses the membrane as a helical span at residues valine 144–tryptophan 168. The Extracellular segment spans residues histidine 169–arginine 193. Residues threonine 194–tyrosine 219 traverse the membrane as a helical segment. Residues arginine 220–lysine 264 lie on the Cytoplasmic side of the membrane. A helical membrane pass occupies residues threonine 265–histidine 291. The Extracellular portion of the chain corresponds to methionine 292–threonine 309. The helical transmembrane segment at phenylalanine 310–phenylalanine 334 threads the bilayer. The Cytoplasmic portion of the chain corresponds to arginine 335–tyrosine 465. A lipid anchor (S-palmitoyl cysteine) is attached at cysteine 344.

Belongs to the G-protein coupled receptor 1 family. As to expression, brain and kidney.

The protein resides in the cell membrane. Its subcellular location is the cell projection. It localises to the cilium membrane. Its function is as follows. This is one of the five types (D1 to D5) of receptors for dopamine. The activity of this receptor is mediated by G proteins which activate adenylyl cyclase. This is D(1C) dopamine receptor (drd1c) from Xenopus laevis (African clawed frog).